Here is a 135-residue protein sequence, read N- to C-terminus: MSEMKIVVTSGKRKTATARAVIKPGKGRVRINSVPVEIHQPELARMKIMEPLIIAKELAEKVDIEVKTWGGGFMAQAEAARTAIARALLEFSGDEELRKAFLEYDRTLLVNDVRRKLPKIQGGRGARARRQTSYR.

This sequence belongs to the universal ribosomal protein uS9 family.

The protein is Small ribosomal subunit protein uS9 (rps9) of Archaeoglobus fulgidus (strain ATCC 49558 / DSM 4304 / JCM 9628 / NBRC 100126 / VC-16).